Here is a 198-residue protein sequence, read N- to C-terminus: Nucleoid occlusion factor SlmA (198 aa).

The 62-residue stretch at Arg-9–Leu-70 folds into the HTH tetR-type domain. The segment at residues Thr-33–Phe-52 is a DNA-binding region (H-T-H motif). The stretch at Asp-119–Lys-144 forms a coiled coil.

Belongs to the nucleoid occlusion factor SlmA family. As to quaternary structure, homodimer. Interacts with FtsZ.

Its subcellular location is the cytoplasm. The protein resides in the nucleoid. Functionally, required for nucleoid occlusion (NO) phenomenon, which prevents Z-ring formation and cell division over the nucleoid. Acts as a DNA-associated cell division inhibitor that binds simultaneously chromosomal DNA and FtsZ, and disrupts the assembly of FtsZ polymers. SlmA-DNA-binding sequences (SBS) are dispersed on non-Ter regions of the chromosome, preventing FtsZ polymerization at these regions. The protein is Nucleoid occlusion factor SlmA of Yersinia enterocolitica serotype O:8 / biotype 1B (strain NCTC 13174 / 8081).